The following is a 308-amino-acid chain: Putative S-adenosyl-L-methionine-dependent methyltransferase MAB_4584c (308 aa).

Residues D131 and D160–L161 each bind S-adenosyl-L-methionine.

It belongs to the UPF0677 family.

In terms of biological role, exhibits S-adenosyl-L-methionine-dependent methyltransferase activity. The polypeptide is Putative S-adenosyl-L-methionine-dependent methyltransferase MAB_4584c (Mycobacteroides abscessus (strain ATCC 19977 / DSM 44196 / CCUG 20993 / CIP 104536 / JCM 13569 / NCTC 13031 / TMC 1543 / L948) (Mycobacterium abscessus)).